Reading from the N-terminus, the 142-residue chain is Hemoglobin subunit alpha (142 aa).

The 141-residue stretch at 2–142 (VLSPADKTNV…VSTVLVSKYR (141 aa)) folds into the Globin domain. At Ser4 the chain carries Phosphoserine. Residue Lys8 is modified to N6-succinyllysine. Position 9 is a phosphothreonine (Thr9). Lys12 bears the N6-succinyllysine mark. Lys17 is modified (N6-acetyllysine; alternate). N6-succinyllysine; alternate is present on Lys17. Tyr25 bears the Phosphotyrosine mark. Ser36 is subject to Phosphoserine. Position 41 is an N6-succinyllysine (Lys41). Phosphoserine is present on Ser50. His59 serves as a coordination point for O2. A heme b-binding site is contributed by His88. Ser103 is modified (phosphoserine). Position 109 is a phosphothreonine (Thr109). Phosphoserine is present on residues Ser125 and Ser132. The residue at position 135 (Thr135) is a Phosphothreonine. Ser139 carries the post-translational modification Phosphoserine.

It belongs to the globin family. In terms of assembly, heterotetramer of two alpha chains and two beta chains. In terms of tissue distribution, red blood cells.

Its function is as follows. Involved in oxygen transport from the lung to the various peripheral tissues. Hemopressin acts as an antagonist peptide of the cannabinoid receptor CNR1. Hemopressin-binding efficiently blocks cannabinoid receptor CNR1 and subsequent signaling. This Antrozous pallidus (Pallid bat) protein is Hemoglobin subunit alpha (HBA).